A 354-amino-acid polypeptide reads, in one-letter code: Methionine import ATP-binding protein MetN (354 aa).

The ABC transporter domain occupies 8–250 (LDHIDITFHQ…PKEALTQEFI (243 aa)). Position 42–49 (42–49 (GYSGAGKS)) interacts with ATP.

It belongs to the ABC transporter superfamily. Methionine importer (TC 3.A.1.24) family. As to quaternary structure, the complex is composed of two ATP-binding proteins (MetN), two transmembrane proteins (MetI) and a solute-binding protein (MetQ).

The protein resides in the cell membrane. It catalyses the reaction L-methionine(out) + ATP + H2O = L-methionine(in) + ADP + phosphate + H(+). The enzyme catalyses D-methionine(out) + ATP + H2O = D-methionine(in) + ADP + phosphate + H(+). Functionally, part of the ABC transporter complex MetNIQ involved in methionine import. Responsible for energy coupling to the transport system. This Streptococcus pyogenes serotype M4 (strain MGAS10750) protein is Methionine import ATP-binding protein MetN.